A 209-amino-acid polypeptide reads, in one-letter code: Thymidine kinase (209 aa).

ATP is bound by residues 9–16 (AAMNAGKS) and 88–91 (DEAQ). Glutamate 89 functions as the Proton acceptor in the catalytic mechanism. Residues cysteine 146, cysteine 148, cysteine 183, and histidine 186 each contribute to the Zn(2+) site.

It belongs to the thymidine kinase family. As to quaternary structure, homotetramer.

The protein localises to the cytoplasm. It catalyses the reaction thymidine + ATP = dTMP + ADP + H(+). This chain is Thymidine kinase, found in Legionella pneumophila (strain Paris).